The chain runs to 357 residues: S-adenosylmethionine decarboxylase proenzyme (357 aa).

Catalysis depends on residues glutamate 11 and glutamate 14. Serine 71 (schiff-base intermediate with substrate; via pyruvic acid) is an active-site residue. A Pyruvic acid (Ser); by autocatalysis modification is found at serine 71. Residue cysteine 85 is the Proton donor; for catalytic activity of the active site. Active-site proton acceptor; for processing activity residues include serine 234 and histidine 247.

It belongs to the eukaryotic AdoMetDC family. The cofactor is pyruvate. Post-translationally, is synthesized initially as an inactive proenzyme. Formation of the active enzyme involves a self-maturation process in which the active site pyruvoyl group is generated from an internal serine residue via an autocatalytic post-translational modification. Two non-identical subunits are generated from the proenzyme in this reaction, and the pyruvate is formed at the N-terminus of the alpha chain, which is derived from the carboxyl end of the proenzyme. The post-translation cleavage follows an unusual pathway, termed non-hydrolytic serinolysis, in which the side chain hydroxyl group of the serine supplies its oxygen atom to form the C-terminus of the beta chain, while the remainder of the serine residue undergoes an oxidative deamination to produce ammonia and the pyruvoyl group blocking the N-terminus of the alpha chain.

It carries out the reaction S-adenosyl-L-methionine + H(+) = S-adenosyl 3-(methylsulfanyl)propylamine + CO2. Its pathway is amine and polyamine biosynthesis; S-adenosylmethioninamine biosynthesis; S-adenosylmethioninamine from S-adenosyl-L-methionine: step 1/1. This chain is S-adenosylmethionine decarboxylase proenzyme (SAMDC), found in Catharanthus roseus (Madagascar periwinkle).